Reading from the N-terminus, the 467-residue chain is Light-independent protochlorophyllide reductase subunit N (467 aa).

The [4Fe-4S] cluster site is built by Cys-24, Cys-49, and Cys-109.

The protein belongs to the BchN/ChlN family. Protochlorophyllide reductase is composed of three subunits; ChlL, ChlN and ChlB. Forms a heterotetramer of two ChlB and two ChlN subunits. [4Fe-4S] cluster serves as cofactor.

It carries out the reaction chlorophyllide a + oxidized 2[4Fe-4S]-[ferredoxin] + 2 ADP + 2 phosphate = protochlorophyllide a + reduced 2[4Fe-4S]-[ferredoxin] + 2 ATP + 2 H2O. Its pathway is porphyrin-containing compound metabolism; chlorophyll biosynthesis (light-independent). In terms of biological role, component of the dark-operative protochlorophyllide reductase (DPOR) that uses Mg-ATP and reduced ferredoxin to reduce ring D of protochlorophyllide (Pchlide) to form chlorophyllide a (Chlide). This reaction is light-independent. The NB-protein (ChlN-ChlB) is the catalytic component of the complex. The polypeptide is Light-independent protochlorophyllide reductase subunit N (Leptolyngbya boryana (Plectonema boryanum)).